The sequence spans 138 residues: MRTLWIMAVLLLGVDGSLVQLWKMIFQETGKEAAKNYGLYGCNCGVGRRGKPKDATDSCCYVHKCCYKKVTGCDPKMDSYSYSWKNKAIVCGEKNPPCLKQVCECDKAVAICLRENLGTYNKKYTIYPKPFCKKADTC.

The signal sequence occupies residues Met-1–Gly-16. 7 disulfide bridges follow: Cys-42-Cys-132, Cys-44-Cys-60, Cys-59-Cys-112, Cys-65-Cys-138, Cys-66-Cys-105, Cys-73-Cys-98, and Cys-91-Cys-103. Residues Gly-45 and Gly-47 each contribute to the Ca(2+) site. His-63 is a catalytic residue. Asp-106 is an active-site residue.

The protein belongs to the phospholipase A2 family. Group II subfamily. K49 sub-subfamily. The cofactor is Ca(2+). Expressed by the venom gland.

It is found in the secreted. It carries out the reaction a 1,2-diacyl-sn-glycero-3-phosphocholine + H2O = a 1-acyl-sn-glycero-3-phosphocholine + a fatty acid + H(+). Its function is as follows. Snake venom phospholipase A2 (PLA2) that has strong myotoxic activity with a low phospholipase A2 activity. PLA2 catalyzes the calcium-dependent hydrolysis of the 2-acyl groups in 3-sn-phosphoglycerides. This chain is Basic phospholipase A2 BP-I, found in Protobothrops flavoviridis (Habu).